We begin with the raw amino-acid sequence, 258 residues long: MTRIDPKAVVDPSAELDEGVTVGPFTVIGPDVQVGAGTRVGPHVVINGPTRLGRNNRIHPFASIGDDPQDKKYAGEPTRLEIGDDNVIREYVTLNRGTPEAGGLTRLGDRNWIMAYSHVAHDCRLGNDITFANSASLAGHVDVEDHAILGGFALVHQFCRIGAYAFCGFGSVINRDVLPFTTVSGHMAQPHGINVVGLRRHGMGPERIRELKRAYRLIFKSGKRLDDALEELRLLGKENPDLEHLAAFIAASNRGILR.

The protein belongs to the transferase hexapeptide repeat family. LpxA subfamily. In terms of assembly, homotrimer.

It is found in the cytoplasm. The enzyme catalyses a (3R)-hydroxyacyl-[ACP] + UDP-N-acetyl-alpha-D-glucosamine = a UDP-3-O-[(3R)-3-hydroxyacyl]-N-acetyl-alpha-D-glucosamine + holo-[ACP]. The protein operates within glycolipid biosynthesis; lipid IV(A) biosynthesis; lipid IV(A) from (3R)-3-hydroxytetradecanoyl-[acyl-carrier-protein] and UDP-N-acetyl-alpha-D-glucosamine: step 1/6. Involved in the biosynthesis of lipid A, a phosphorylated glycolipid that anchors the lipopolysaccharide to the outer membrane of the cell. This chain is Acyl-[acyl-carrier-protein]--UDP-N-acetylglucosamine O-acyltransferase, found in Alkalilimnicola ehrlichii (strain ATCC BAA-1101 / DSM 17681 / MLHE-1).